Reading from the N-terminus, the 550-residue chain is CTP synthase (550 aa).

The segment at 1–265 (MTKFIFVTGG…DEIVVEQLGL (265 aa)) is amidoligase domain. CTP is bound at residue S13. UTP is bound at residue S13. 14-19 (SLGKGI) provides a ligand contact to ATP. L-glutamine is bound at residue Y54. ATP is bound at residue D71. Mg(2+)-binding residues include D71 and E139. CTP is bound by residues 146–148 (DIE), 186–191 (KTKPTQ), and K222. Residues 186–191 (KTKPTQ) and K222 each bind UTP. A Glutamine amidotransferase type-1 domain is found at 290-541 (TITLVGKYVD…IRAAAEHRRR (252 aa)). G351 contributes to the L-glutamine binding site. C378 acts as the Nucleophile; for glutamine hydrolysis in catalysis. Residues 379–382 (LGMQ), E402, and R469 contribute to the L-glutamine site. Active-site residues include H514 and E516.

This sequence belongs to the CTP synthase family. In terms of assembly, homotetramer.

The catalysed reaction is UTP + L-glutamine + ATP + H2O = CTP + L-glutamate + ADP + phosphate + 2 H(+). It catalyses the reaction L-glutamine + H2O = L-glutamate + NH4(+). It carries out the reaction UTP + NH4(+) + ATP = CTP + ADP + phosphate + 2 H(+). The protein operates within pyrimidine metabolism; CTP biosynthesis via de novo pathway; CTP from UDP: step 2/2. With respect to regulation, allosterically activated by GTP, when glutamine is the substrate; GTP has no effect on the reaction when ammonia is the substrate. The allosteric effector GTP functions by stabilizing the protein conformation that binds the tetrahedral intermediate(s) formed during glutamine hydrolysis. Inhibited by the product CTP, via allosteric rather than competitive inhibition. Functionally, catalyzes the ATP-dependent amination of UTP to CTP with either L-glutamine or ammonia as the source of nitrogen. Regulates intracellular CTP levels through interactions with the four ribonucleotide triphosphates. The polypeptide is CTP synthase (Nitrosococcus oceani (strain ATCC 19707 / BCRC 17464 / JCM 30415 / NCIMB 11848 / C-107)).